The primary structure comprises 377 residues: Glutamate 5-kinase (377 aa).

Lysine 22 serves as a coordination point for ATP. 3 residues coordinate substrate: serine 62, aspartate 149, and asparagine 161. Residues 181–182 and 223–229 contribute to the ATP site; these read TD and TGGMVTK. In terms of domain architecture, PUA spans 285–363; the sequence is RGTIVVDAGA…AQLKRFLGPQ (79 aa).

The protein belongs to the glutamate 5-kinase family.

The protein resides in the cytoplasm. The enzyme catalyses L-glutamate + ATP = L-glutamyl 5-phosphate + ADP. The protein operates within amino-acid biosynthesis; L-proline biosynthesis; L-glutamate 5-semialdehyde from L-glutamate: step 1/2. Catalyzes the transfer of a phosphate group to glutamate to form L-glutamate 5-phosphate. In Bifidobacterium longum (strain DJO10A), this protein is Glutamate 5-kinase.